Reading from the N-terminus, the 100-residue chain is Urease subunit gamma (100 aa).

It belongs to the urease gamma subunit family. Heterotrimer of UreA (gamma), UreB (beta) and UreC (alpha) subunits. Three heterotrimers associate to form the active enzyme.

The protein localises to the cytoplasm. The enzyme catalyses urea + 2 H2O + H(+) = hydrogencarbonate + 2 NH4(+). It functions in the pathway nitrogen metabolism; urea degradation; CO(2) and NH(3) from urea (urease route): step 1/1. The polypeptide is Urease subunit gamma (Variovorax paradoxus (strain S110)).